Consider the following 60-residue polypeptide: uncharacterized protein (60 aa).

This is an uncharacterized protein from Archaeoglobus fulgidus (strain ATCC 49558 / DSM 4304 / JCM 9628 / NBRC 100126 / VC-16).